A 427-amino-acid chain; its full sequence is Glutamate-1-semialdehyde 2,1-aminomutase 2 (427 aa).

N6-(pyridoxal phosphate)lysine is present on Lys267.

It belongs to the class-III pyridoxal-phosphate-dependent aminotransferase family. HemL subfamily. Homodimer. Requires pyridoxal 5'-phosphate as cofactor.

The protein localises to the cytoplasm. It catalyses the reaction (S)-4-amino-5-oxopentanoate = 5-aminolevulinate. It participates in porphyrin-containing compound metabolism; protoporphyrin-IX biosynthesis; 5-aminolevulinate from L-glutamyl-tRNA(Glu): step 2/2. The protein is Glutamate-1-semialdehyde 2,1-aminomutase 2 of Staphylococcus haemolyticus (strain JCSC1435).